Consider the following 376-residue polypeptide: Alpha-centractin (376 aa).

M1 is subject to N-acetylmethionine.

Belongs to the actin family. ARP1 subfamily. Part of the ACTR1A/ACTB filament around which the dynactin complex is built. The filament contains 8 copies of ACTR1A and 1 ACTB. Interacts with dynein and adapters such as BICD2. Interacts with BCCIP (isoform 2/alpha).

It is found in the cytoplasm. Its subcellular location is the cytoskeleton. It localises to the microtubule organizing center. The protein resides in the centrosome. The protein localises to the cell cortex. Part of the ACTR1A/ACTB filament around which the dynactin complex is built. The dynactin multiprotein complex activates the molecular motor dynein for ultra-processive transport along microtubules. This is Alpha-centractin (ACTR1A) from Canis lupus familiaris (Dog).